The primary structure comprises 876 residues: Alanine--tRNA ligase (876 aa).

Positions 564, 568, 666, and 670 each coordinate Zn(2+).

It belongs to the class-II aminoacyl-tRNA synthetase family. Homotetramer. Requires Zn(2+) as cofactor.

Its subcellular location is the cytoplasm. It catalyses the reaction tRNA(Ala) + L-alanine + ATP = L-alanyl-tRNA(Ala) + AMP + diphosphate. In terms of biological role, catalyzes the attachment of alanine to tRNA(Ala) in a two-step reaction: alanine is first activated by ATP to form Ala-AMP and then transferred to the acceptor end of tRNA(Ala). Also edits incorrectly charged Ser-tRNA(Ala) and Gly-tRNA(Ala) via its editing domain. This is Alanine--tRNA ligase from Salmonella choleraesuis (strain SC-B67).